The sequence spans 454 residues: Bifunctional protein GlmU (454 aa).

A pyrophosphorylase region spans residues 1 to 226 (MALNVVILAA…AIEVEGANNR (226 aa)). UDP-N-acetyl-alpha-D-glucosamine contacts are provided by residues 8–11 (LAAG), lysine 22, glutamine 73, 78–79 (GT), 100–102 (YGD), glycine 137, glutamate 151, asparagine 166, and asparagine 224. A Mg(2+)-binding site is contributed by aspartate 102. Asparagine 224 provides a ligand contact to Mg(2+). The tract at residues 227 to 247 (VQLAQLERAYQARAAEKLMLE) is linker. The segment at 248 to 454 (GANLRDPARI…GWPRPVKLKK (207 aa)) is N-acetyltransferase. Positions 330 and 348 each coordinate UDP-N-acetyl-alpha-D-glucosamine. The active-site Proton acceptor is histidine 360. Residues tyrosine 363 and asparagine 374 each coordinate UDP-N-acetyl-alpha-D-glucosamine. Residues alanine 377, 383–384 (NY), serine 402, alanine 420, and arginine 437 contribute to the acetyl-CoA site.

The protein in the N-terminal section; belongs to the N-acetylglucosamine-1-phosphate uridyltransferase family. It in the C-terminal section; belongs to the transferase hexapeptide repeat family. In terms of assembly, homotrimer. The cofactor is Mg(2+).

Its subcellular location is the cytoplasm. The enzyme catalyses alpha-D-glucosamine 1-phosphate + acetyl-CoA = N-acetyl-alpha-D-glucosamine 1-phosphate + CoA + H(+). It catalyses the reaction N-acetyl-alpha-D-glucosamine 1-phosphate + UTP + H(+) = UDP-N-acetyl-alpha-D-glucosamine + diphosphate. Its pathway is nucleotide-sugar biosynthesis; UDP-N-acetyl-alpha-D-glucosamine biosynthesis; N-acetyl-alpha-D-glucosamine 1-phosphate from alpha-D-glucosamine 6-phosphate (route II): step 2/2. It participates in nucleotide-sugar biosynthesis; UDP-N-acetyl-alpha-D-glucosamine biosynthesis; UDP-N-acetyl-alpha-D-glucosamine from N-acetyl-alpha-D-glucosamine 1-phosphate: step 1/1. The protein operates within bacterial outer membrane biogenesis; LPS lipid A biosynthesis. Functionally, catalyzes the last two sequential reactions in the de novo biosynthetic pathway for UDP-N-acetylglucosamine (UDP-GlcNAc). The C-terminal domain catalyzes the transfer of acetyl group from acetyl coenzyme A to glucosamine-1-phosphate (GlcN-1-P) to produce N-acetylglucosamine-1-phosphate (GlcNAc-1-P), which is converted into UDP-GlcNAc by the transfer of uridine 5-monophosphate (from uridine 5-triphosphate), a reaction catalyzed by the N-terminal domain. The sequence is that of Bifunctional protein GlmU from Shewanella woodyi (strain ATCC 51908 / MS32).